We begin with the raw amino-acid sequence, 886 residues long: Alanine--tRNA ligase (886 aa).

Zn(2+) contacts are provided by His564, His568, Cys666, and His670.

The protein belongs to the class-II aminoacyl-tRNA synthetase family. Requires Zn(2+) as cofactor.

It localises to the cytoplasm. The catalysed reaction is tRNA(Ala) + L-alanine + ATP = L-alanyl-tRNA(Ala) + AMP + diphosphate. Its function is as follows. Catalyzes the attachment of alanine to tRNA(Ala) in a two-step reaction: alanine is first activated by ATP to form Ala-AMP and then transferred to the acceptor end of tRNA(Ala). Also edits incorrectly charged Ser-tRNA(Ala) and Gly-tRNA(Ala) via its editing domain. This is Alanine--tRNA ligase from Prochlorococcus marinus (strain AS9601).